The sequence spans 521 residues: Acetyl-CoA hydrolase (521 aa).

276 to 280 (GIGNI) serves as a coordination point for CoA. Glutamate 301 functions as the 5-glutamyl coenzyme A thioester intermediate in the catalytic mechanism. Residues asparagine 391 and glycine 395 each contribute to the CoA site.

The protein belongs to the acetyl-CoA hydrolase/transferase family.

It localises to the cytoplasm. It catalyses the reaction acetyl-CoA + H2O = acetate + CoA + H(+). In terms of biological role, presumably involved in regulating the intracellular acetyl-CoA pool for fatty acid and cholesterol synthesis and fatty acid oxidation. This is Acetyl-CoA hydrolase (ach1) from Schizosaccharomyces pombe (strain 972 / ATCC 24843) (Fission yeast).